A 686-amino-acid chain; its full sequence is Phosphomethylpyrimidine synthase (686 aa).

Substrate-binding positions include Asn-235, Met-264, Tyr-293, His-329, 349–351 (SRG), 390–393 (DGMR), and Glu-429. Zn(2+) is bound at residue His-433. Tyr-456 lines the substrate pocket. His-497 is a Zn(2+) binding site. Positions 577, 580, and 585 each coordinate [4Fe-4S] cluster. The disordered stretch occupies residues 659 to 686 (IDSSGINDNKNDQQDASVVRVPSLEIEG).

The protein belongs to the ThiC family. In terms of assembly, homodimer. It depends on [4Fe-4S] cluster as a cofactor.

It carries out the reaction 5-amino-1-(5-phospho-beta-D-ribosyl)imidazole + S-adenosyl-L-methionine = 4-amino-2-methyl-5-(phosphooxymethyl)pyrimidine + CO + 5'-deoxyadenosine + formate + L-methionine + 3 H(+). Its pathway is cofactor biosynthesis; thiamine diphosphate biosynthesis. Its function is as follows. Catalyzes the synthesis of the hydroxymethylpyrimidine phosphate (HMP-P) moiety of thiamine from aminoimidazole ribotide (AIR) in a radical S-adenosyl-L-methionine (SAM)-dependent reaction. In Shewanella denitrificans (strain OS217 / ATCC BAA-1090 / DSM 15013), this protein is Phosphomethylpyrimidine synthase.